The sequence spans 133 residues: Single-stranded DNA-binding protein 2 (133 aa).

Residues 1-103 (MNKTILIGRL…VVAEEVKFLE (103 aa)) form the SSB domain.

In terms of assembly, homotetramer.

The polypeptide is Single-stranded DNA-binding protein 2 (ssb2) (Clostridium acetobutylicum (strain ATCC 824 / DSM 792 / JCM 1419 / IAM 19013 / LMG 5710 / NBRC 13948 / NRRL B-527 / VKM B-1787 / 2291 / W)).